A 408-amino-acid chain; its full sequence is Dihydrolipoyllysine-residue acetyltransferase component of pyruvate dehydrogenase complex (408 aa).

The region spanning 2–78 (PIKILMPALS…PVNSLIAVLS (77 aa)) is the Lipoyl-binding domain. Lys-43 bears the N6-lipoyllysine mark. The Peripheral subunit-binding (PSBD) domain occupies 128–165 (FASPLAKRLAKIGDIRLENVQGSGPHGRIVKQDILSYD). His-381 is a catalytic residue.

Belongs to the 2-oxoacid dehydrogenase family. Forms a 24-polypeptide structural core with octahedral symmetry. The cofactor is (R)-lipoate.

It catalyses the reaction N(6)-[(R)-dihydrolipoyl]-L-lysyl-[protein] + acetyl-CoA = N(6)-[(R)-S(8)-acetyldihydrolipoyl]-L-lysyl-[protein] + CoA. The pyruvate dehydrogenase complex catalyzes the overall conversion of pyruvate to acetyl-CoA and CO(2). It contains multiple copies of three enzymatic components: pyruvate dehydrogenase (E1), dihydrolipoamide acetyltransferase (E2) and lipoamide dehydrogenase (E3). This chain is Dihydrolipoyllysine-residue acetyltransferase component of pyruvate dehydrogenase complex (pdhC), found in Rickettsia prowazekii (strain Madrid E).